We begin with the raw amino-acid sequence, 168 residues long: Photosystem I assembly protein Ycf3 (168 aa).

3 TPR repeats span residues 35–68, 72–105, and 120–153; these read AFTY…EIDP, SYIL…NPSL, and GEQA…APSN.

The protein belongs to the Ycf3 family.

The protein localises to the plastid. It localises to the chloroplast thylakoid membrane. Its function is as follows. Essential for the assembly of the photosystem I (PSI) complex. May act as a chaperone-like factor to guide the assembly of the PSI subunits. This Physcomitrium patens (Spreading-leaved earth moss) protein is Photosystem I assembly protein Ycf3.